A 92-amino-acid polypeptide reads, in one-letter code: Progonadoliberin-1 (92 aa).

Residues 1 to 23 form the signal peptide; sequence METIPKLMAAVVLLTVCLEGCSS. The residue at position 24 (glutamine 24) is a Pyrrolidone carboxylic acid. At glycine 33 the chain carries Glycine amide.

It belongs to the GnRH family. The precursor is cleaved by ACE, which removes the Gly-Lys-Arg peptide at the C-terminus, leading to mature hormone. The mature form of Gonadoliberin-1 is also cleaved and degraded by ACE. Central nervous system.

It localises to the secreted. Functionally, stimulates the secretion of gonadotropins; it stimulates the secretion of both luteinizing and follicle-stimulating hormones. This chain is Progonadoliberin-1 (Gnrh1), found in Rattus norvegicus (Rat).